Reading from the N-terminus, the 263-residue chain is Endonuclease 8 (263 aa).

Pro-2 acts as the Schiff-base intermediate with DNA in catalysis. Glu-3 functions as the Proton donor in the catalytic mechanism. Lys-53 acts as the Proton donor; for beta-elimination activity in catalysis. DNA contacts are provided by Gln-70, Arg-125, and Asn-169. An FPG-type zinc finger spans residues 229–263; sequence KVFHRDGELCERCGGIIEKTTLSSRPFYWCPGCQH. The Proton donor; for delta-elimination activity role is filled by Arg-253.

This sequence belongs to the FPG family. Zn(2+) is required as a cofactor.

It carries out the reaction 2'-deoxyribonucleotide-(2'-deoxyribose 5'-phosphate)-2'-deoxyribonucleotide-DNA = a 3'-end 2'-deoxyribonucleotide-(2,3-dehydro-2,3-deoxyribose 5'-phosphate)-DNA + a 5'-end 5'-phospho-2'-deoxyribonucleoside-DNA + H(+). Involved in base excision repair of DNA damaged by oxidation or by mutagenic agents. Acts as a DNA glycosylase that recognizes and removes damaged bases. Has a preference for oxidized pyrimidines, such as thymine glycol, 5,6-dihydrouracil and 5,6-dihydrothymine. Has AP (apurinic/apyrimidinic) lyase activity and introduces nicks in the DNA strand. Cleaves the DNA backbone by beta-delta elimination to generate a single-strand break at the site of the removed base with both 3'- and 5'-phosphates. This chain is Endonuclease 8, found in Shigella flexneri serotype 5b (strain 8401).